A 667-amino-acid chain; its full sequence is UvrABC system protein B (667 aa).

A Helicase ATP-binding domain is found at 31–414 (KNFEAGAKAQ…EAEQTDIQVD (384 aa)). ATP is bound at residue 44–51 (GATGTGKT). The short motif at 97–120 (YYDYYQPEAYVPSSDTYIEKDSSI) is the Beta-hairpin element. The Helicase C-terminal domain maps to 435 to 597 (QIDDLVGEIN…ITPKTIIKPI (163 aa)). Residues 630–665 (LEMVERLSEQMRLAAKKLDFEQAATLRDTILELKSE) form the UVR domain.

This sequence belongs to the UvrB family. As to quaternary structure, forms a heterotetramer with UvrA during the search for lesions. Interacts with UvrC in an incision complex.

It localises to the cytoplasm. Its function is as follows. The UvrABC repair system catalyzes the recognition and processing of DNA lesions. A damage recognition complex composed of 2 UvrA and 2 UvrB subunits scans DNA for abnormalities. Upon binding of the UvrA(2)B(2) complex to a putative damaged site, the DNA wraps around one UvrB monomer. DNA wrap is dependent on ATP binding by UvrB and probably causes local melting of the DNA helix, facilitating insertion of UvrB beta-hairpin between the DNA strands. Then UvrB probes one DNA strand for the presence of a lesion. If a lesion is found the UvrA subunits dissociate and the UvrB-DNA preincision complex is formed. This complex is subsequently bound by UvrC and the second UvrB is released. If no lesion is found, the DNA wraps around the other UvrB subunit that will check the other stand for damage. This chain is UvrABC system protein B, found in Latilactobacillus sakei subsp. sakei (strain 23K) (Lactobacillus sakei subsp. sakei).